A 391-amino-acid chain; its full sequence is Sulfate adenylyltransferase (391 aa).

Belongs to the sulfate adenylyltransferase family.

The catalysed reaction is sulfate + ATP + H(+) = adenosine 5'-phosphosulfate + diphosphate. Its pathway is sulfur metabolism; hydrogen sulfide biosynthesis; sulfite from sulfate: step 1/3. The polypeptide is Sulfate adenylyltransferase (Lactiplantibacillus plantarum (strain ATCC BAA-793 / NCIMB 8826 / WCFS1) (Lactobacillus plantarum)).